Here is a 436-residue protein sequence, read N- to C-terminus: 3-ketoacyl-CoA thiolase (436 aa).

Cysteine 99 acts as the Acyl-thioester intermediate in catalysis. Catalysis depends on proton acceptor residues histidine 392 and cysteine 422.

This sequence belongs to the thiolase-like superfamily. Thiolase family. In terms of assembly, heterotetramer of two alpha chains (FadJ) and two beta chains (FadI).

The protein localises to the cytoplasm. The catalysed reaction is an acyl-CoA + acetyl-CoA = a 3-oxoacyl-CoA + CoA. The protein operates within lipid metabolism; fatty acid beta-oxidation. Catalyzes the final step of fatty acid oxidation in which acetyl-CoA is released and the CoA ester of a fatty acid two carbons shorter is formed. The polypeptide is 3-ketoacyl-CoA thiolase (Salmonella paratyphi C (strain RKS4594)).